A 212-amino-acid chain; its full sequence is Inactive ribonuclease-like protein 10 (212 aa).

An N-terminal signal peptide occupies residues 1–24 (MKVTLVHLLFMMLLLLLGLGVGLG). N-linked (GlcNAc...) asparagine glycans are attached at residues Asn-129 and Asn-204.

Belongs to the pancreatic ribonuclease family. The N-terminus is blocked. Glycosylated. As to expression, male-specific expression in proximal caput of the epididymis.

It is found in the secreted. Functionally, secreted proximal epididymal protein required for post-testicular sperm maturation and male fertility. May be involved in sperm adhesion to the egg zona pellucida. Does not have ribonuclease activity. The protein is Inactive ribonuclease-like protein 10 (Rnase10) of Rattus norvegicus (Rat).